The following is a 94-amino-acid chain: MLKPLEDRVVIAVKDEAEQTVGGIVIASNAKQKPQTGKVVAVGAGAMTSDGQRIPLDVKENDEVIYDKYAGSEVEYEGQQYLVLHAKDIIAIIE.

The protein belongs to the GroES chaperonin family. Heptamer of 7 subunits arranged in a ring. Interacts with the chaperonin GroEL.

It is found in the cytoplasm. Functionally, together with the chaperonin GroEL, plays an essential role in assisting protein folding. The GroEL-GroES system forms a nano-cage that allows encapsulation of the non-native substrate proteins and provides a physical environment optimized to promote and accelerate protein folding. GroES binds to the apical surface of the GroEL ring, thereby capping the opening of the GroEL channel. In Latilactobacillus sakei subsp. sakei (strain 23K) (Lactobacillus sakei subsp. sakei), this protein is Co-chaperonin GroES.